The sequence spans 679 residues: Penicillin-binding protein PbpB (679 aa).

The interval 1–74 is disordered; the sequence is MSRAAPRRAS…STRARRTRQV (74 aa). The Cytoplasmic portion of the chain corresponds to 1-90; sequence MSRAAPRRAS…GASFVFRHRT (90 aa). Positions 42 to 54 are enriched in polar residues; sequence ARQAQEATKSRPA. The chain crosses the membrane as a helical span at residues 91–111; that stretch reads GNAVILVLMLVAATQLFFLQV. Residues 112-679 lie on the Extracellular side of the membrane; the sequence is SHAAGLRAQA…PGPPLVLQAT (568 aa). Serine 386 functions as the Acyl-ester intermediate in the catalytic mechanism.

Belongs to the transpeptidase family. In terms of assembly, interacts with Wag31. Cleaved by Rip1 in response to oxidative stress (H(2)O(2)), prevented by Wag31. Cleavage probably occurs near residues 102-103.

The protein resides in the cell membrane. The protein operates within cell wall biogenesis; peptidoglycan biosynthesis. Synthesis of cross-linked peptidoglycan from the lipid intermediates. The chain is Penicillin-binding protein PbpB (pbpB) from Mycobacterium tuberculosis (strain ATCC 25618 / H37Rv).